The chain runs to 226 residues: Sugar fermentation stimulation protein homolog (226 aa).

Belongs to the SfsA family.

The protein is Sugar fermentation stimulation protein homolog of Ruminiclostridium cellulolyticum (strain ATCC 35319 / DSM 5812 / JCM 6584 / H10) (Clostridium cellulolyticum).